We begin with the raw amino-acid sequence, 147 residues long: D-aminoacyl-tRNA deacylase (147 aa).

The Gly-cisPro motif, important for rejection of L-amino acids signature appears at 137–138; the sequence is GP.

It belongs to the DTD family. In terms of assembly, homodimer.

The protein resides in the cytoplasm. The enzyme catalyses glycyl-tRNA(Ala) + H2O = tRNA(Ala) + glycine + H(+). The catalysed reaction is a D-aminoacyl-tRNA + H2O = a tRNA + a D-alpha-amino acid + H(+). Functionally, an aminoacyl-tRNA editing enzyme that deacylates mischarged D-aminoacyl-tRNAs. Also deacylates mischarged glycyl-tRNA(Ala), protecting cells against glycine mischarging by AlaRS. Acts via tRNA-based rather than protein-based catalysis; rejects L-amino acids rather than detecting D-amino acids in the active site. By recycling D-aminoacyl-tRNA to D-amino acids and free tRNA molecules, this enzyme counteracts the toxicity associated with the formation of D-aminoacyl-tRNA entities in vivo and helps enforce protein L-homochirality. The chain is D-aminoacyl-tRNA deacylase from Acinetobacter baumannii (strain ACICU).